The primary structure comprises 212 residues: Pyridoxine/pyridoxamine 5'-phosphate oxidase (212 aa).

Residues 61 to 66 (RTVLLK), 76 to 77 (FT), lysine 82, lysine 83, and glutamine 105 each bind FMN. Lysine 66 contributes to the substrate binding site. Residues tyrosine 123, arginine 127, and serine 131 each contribute to the substrate site. FMN-binding positions include 140-141 (QS) and tryptophan 185. 191–193 (RLH) contributes to the substrate binding site. Arginine 195 contributes to the FMN binding site.

Belongs to the pyridoxamine 5'-phosphate oxidase family. Homodimer. It depends on FMN as a cofactor.

It catalyses the reaction pyridoxamine 5'-phosphate + O2 + H2O = pyridoxal 5'-phosphate + H2O2 + NH4(+). The enzyme catalyses pyridoxine 5'-phosphate + O2 = pyridoxal 5'-phosphate + H2O2. The protein operates within cofactor metabolism; pyridoxal 5'-phosphate salvage; pyridoxal 5'-phosphate from pyridoxamine 5'-phosphate: step 1/1. Its pathway is cofactor metabolism; pyridoxal 5'-phosphate salvage; pyridoxal 5'-phosphate from pyridoxine 5'-phosphate: step 1/1. Catalyzes the oxidation of either pyridoxine 5'-phosphate (PNP) or pyridoxamine 5'-phosphate (PMP) into pyridoxal 5'-phosphate (PLP). The chain is Pyridoxine/pyridoxamine 5'-phosphate oxidase from Vesicomyosocius okutanii subsp. Calyptogena okutanii (strain HA).